We begin with the raw amino-acid sequence, 412 residues long: Arginine biosynthesis bifunctional protein ArgJ (412 aa).

Substrate contacts are provided by Thr155, Lys181, Thr192, Glu279, Asn407, and Ser412. Thr192 serves as the catalytic Nucleophile.

The protein belongs to the ArgJ family. As to quaternary structure, heterotetramer of two alpha and two beta chains.

It is found in the cytoplasm. The catalysed reaction is N(2)-acetyl-L-ornithine + L-glutamate = N-acetyl-L-glutamate + L-ornithine. It carries out the reaction L-glutamate + acetyl-CoA = N-acetyl-L-glutamate + CoA + H(+). It functions in the pathway amino-acid biosynthesis; L-arginine biosynthesis; L-ornithine and N-acetyl-L-glutamate from L-glutamate and N(2)-acetyl-L-ornithine (cyclic): step 1/1. It participates in amino-acid biosynthesis; L-arginine biosynthesis; N(2)-acetyl-L-ornithine from L-glutamate: step 1/4. Its function is as follows. Catalyzes two activities which are involved in the cyclic version of arginine biosynthesis: the synthesis of N-acetylglutamate from glutamate and acetyl-CoA as the acetyl donor, and of ornithine by transacetylation between N(2)-acetylornithine and glutamate. The polypeptide is Arginine biosynthesis bifunctional protein ArgJ (Aromatoleum aromaticum (strain DSM 19018 / LMG 30748 / EbN1) (Azoarcus sp. (strain EbN1))).